The sequence spans 704 residues: Boron transporter 1 (704 aa).

At 1 to 35 (MEETFVPFEGIKNDLKGRLMCYKQDWTGGFKAGFR) the chain is on the cytoplasmic side. A helical transmembrane segment spans residues 36–56 (ILAPTTYIFFASAIPVISFGE). The Extracellular segment spans residues 57–75 (QLERSTDGVLTAVQTLAST). The helical transmembrane segment at 76–96 (AICGMIHSIIGGQPLLILGVA) threads the bilayer. The Cytoplasmic portion of the chain corresponds to 97 to 120 (EPTVIMYTFMFNFAKARPELGRDL). Residues 121–141 (FLAWSGWVCVWTALMLFVLAI) form a helical membrane-spanning segment. Residues 142 to 155 (CGACSIINRFTRVA) are Extracellular-facing. The chain crosses the membrane as a helical span at residues 156–176 (GELFGLLIAMLFMQQAIKGLV). The Cytoplasmic portion of the chain corresponds to 177 to 195 (DEFRIPERENQKLKEFLPS). A helical membrane pass occupies residues 196-216 (WRFANGMFALVLSFGLLLTGL). The Extracellular segment spans residues 217 to 233 (RSRKARSWRYGTGWLRS). The helical transmembrane segment at 234-254 (LIADYGVPLMVLVWTGVSYIP) threads the bilayer. Topologically, residues 255 to 289 (AGDVPKGIPRRLFSPNPWSPGAYGNWTVVKEMLDV) are cytoplasmic. The helical transmembrane segment at 290–310 (PIVYIIGAFIPASMIAVLYYF) threads the bilayer. The Extracellular portion of the chain corresponds to 311-337 (DHSVASQLAQQKEFNLRKPSSYHYDLL). Residues 338–358 (LLGFLTLMCGLLGVPPSNGVI) form a helical membrane-spanning segment. Residues 359 to 480 (PQSPMHTKSL…STMVGGCVAA (122 aa)) are Cytoplasmic-facing. A helical membrane pass occupies residues 481 to 501 (MPILKMIPTSVLWGYFAFMAI). At 502 to 557 (ESLPGNQFWERILLLFTAPSRRFKVLEDYHATFVETVPFKTIAMFTLFQTTYLLIC) the chain is on the extracellular side. Residues 558 to 578 (FGLTWIPIAGVMFPLMIMFLI) traverse the membrane as a helical segment. Residues 579–704 (PVRQYLLPRF…RSPLNQSSSN (126 aa)) lie on the Cytoplasmic side of the membrane. The tract at residues 641–704 (EFRHTSSPKV…RSPLNQSSSN (64 aa)) is disordered. Residues 647–664 (SPKVTSSSSTPVNNRSLS) show a composition bias toward low complexity.

This sequence belongs to the anion exchanger (TC 2.A.31.3) family. Expressed in proximal side of various root cells, notably in the columella, lateral root cap, epidermis and endodermis in tip and elongation zones of the root. Also detected in the epidermis, cortex, endodermis, and stele cells of the root hair zone. Observed in cotyledons and hypocotyls.

The protein resides in the cell membrane. It is found in the endosome membrane. Its subcellular location is the vacuole membrane. Its function is as follows. Efflux-type boron (B) transporter for xylem loading, responsive of boron translocation from roots to shoots under boron limitation. Boron is essential for maintaining the integrity of plants cell walls. The protein is Boron transporter 1 of Arabidopsis thaliana (Mouse-ear cress).